A 248-amino-acid chain; its full sequence is Glucosamine-6-phosphate isomerase (248 aa).

The Proton acceptor; for enolization step role is filled by D68. The active-site For ring-opening step is E137. H139 (proton acceptor; for ring-opening step) is an active-site residue. Residue E144 is the For ring-opening step of the active site.

The protein belongs to the glucosamine/galactosamine-6-phosphate isomerase family. Monomer.

The enzyme catalyses alpha-D-glucosamine 6-phosphate + H2O = beta-D-fructose 6-phosphate + NH4(+). This is Glucosamine-6-phosphate isomerase (NAG1) from Candida albicans (strain SC5314 / ATCC MYA-2876) (Yeast).